The chain runs to 297 residues: Acetaldehyde dehydrogenase (297 aa).

The active-site Acyl-thioester intermediate is Cys-128. Residues 159–167 (SAGPGTRQN) and Asn-272 each bind NAD(+).

It belongs to the acetaldehyde dehydrogenase family.

It catalyses the reaction acetaldehyde + NAD(+) + CoA = acetyl-CoA + NADH + H(+). In Desulfitobacterium hafniense (strain DSM 10664 / DCB-2), this protein is Acetaldehyde dehydrogenase.